We begin with the raw amino-acid sequence, 387 residues long: Patatin group D-3 (387 aa).

Positions 1-23 (MATTKSFLILIVMILATTSSTFA) are cleaved as a signal peptide. In terms of domain architecture, PNPLA spans 32–230 (LSIDGGGIKG…TVADPALLSI (199 aa)). Residues 36 to 41 (GGGIKG) carry the GXGXXG motif. A GXSXG motif is present at residues 75–79 (GTSTG). Ser77 functions as the Nucleophile in the catalytic mechanism. A glycan (N-linked (GlcNAc...) asparagine) is linked at Asn115. Catalysis depends on Asp216, which acts as the Proton acceptor. The short motif at 216-218 (DGA) is the DGA/G element. Positions 361 to 385 (ETYEEALKRFAKLLSDRKKLRANKA) form a coiled coil.

This sequence belongs to the patatin family. As to expression, tuber.

It localises to the vacuole. Probable lipolytic acyl hydrolase (LAH), an activity which is thought to be involved in the response of tubers to pathogens. This is Patatin group D-3 from Solanum tuberosum (Potato).